Reading from the N-terminus, the 194-residue chain is Imidazoleglycerol-phosphate dehydratase (194 aa).

Belongs to the imidazoleglycerol-phosphate dehydratase family.

The protein localises to the cytoplasm. The catalysed reaction is D-erythro-1-(imidazol-4-yl)glycerol 3-phosphate = 3-(imidazol-4-yl)-2-oxopropyl phosphate + H2O. It functions in the pathway amino-acid biosynthesis; L-histidine biosynthesis; L-histidine from 5-phospho-alpha-D-ribose 1-diphosphate: step 6/9. The chain is Imidazoleglycerol-phosphate dehydratase from Lacticaseibacillus paracasei (strain ATCC 334 / BCRC 17002 / CCUG 31169 / CIP 107868 / KCTC 3260 / NRRL B-441) (Lactobacillus paracasei).